The chain runs to 1252 residues: Myosin-1 (1252 aa).

The tract at residues 1–27 (MAPSKKAGKKVTPASKKSAGQGKVAKA) is disordered. The Myosin motor domain maps to 38–712 (VGVSDMTLLT…TLFALETMRD (675 aa)). Position 128–135 (128–135 (GESGAGKT)) interacts with ATP. Ser356 is modified (phosphoserine). The actin-binding stretch occupies residues 403-485 (IIGILDIFGF…PGIFAALNDA (83 aa)). IQ domains lie at 716-736 (HNMA…KHEC) and 737-762 (ARRI…YGHQ). The TH1 domain maps to 770–953 (RRRFSLLSYR…TVHVASGEPP (184 aa)). Disordered regions lie at residues 945–1049 (VHVA…PETP) and 1103–1228 (PPKA…PATA). Composition is skewed to pro residues over residues 989–999 (RSVPKPKPVAQ) and 1028–1046 (RPPP…PAKP). One can recognise an SH3 domain in the interval 1046-1104 (PETPMYRAKFAFEGQEGEMSLKKDDVVELVEKDDNGWWLVKMDGVEGWAPNNYLELVPP). Residues 1162–1175 (ADTTPASSRPSSAI) show a composition bias toward polar residues. A compositionally biased stretch (pro residues) spans 1178 to 1193 (KPPPPVAAKPKPPVIP). The span at 1194–1203 (VKPSVSAKGP) shows a compositional bias: low complexity. The segment covering 1204-1215 (AKPPIPTAPRPP) has biased composition (pro residues). A compositionally biased stretch (low complexity) spans 1216-1228 (AASTSRSSKPATA).

This sequence belongs to the TRAFAC class myosin-kinesin ATPase superfamily. Myosin family. Phosphorylation of the TEDS site (Ser-356) is required for the polarization of the actin cytoskeleton. Phosphorylation probably activates the myosin-I ATPase activity.

It localises to the cytoplasm. It is found in the cytoskeleton. Its subcellular location is the actin patch. In terms of biological role, type-I myosin implicated in the organization of the actin cytoskeleton. Required for proper actin cytoskeleton polarization. At the cell cortex, assembles in patch-like structures together with proteins from the actin-polymerizing machinery and promotes actin assembly. Functions as actin nucleation-promoting factor (NPF) for the Arp2/3 complex. This is Myosin-1 (MYO1) from Laccaria bicolor (strain S238N-H82 / ATCC MYA-4686) (Bicoloured deceiver).